The following is a 359-amino-acid chain: Pyruvate dehydrogenase E1 component subunit beta, mitochondrial (359 aa).

A mitochondrion-targeting transit peptide spans 1–30 (MAAVSGLVRRPLREVSGLLKRRFHWTAPAA). Position 67 is a phosphotyrosine (Tyr-67). Thiamine diphosphate is bound at residue Glu-89. Positions 142, 190, 191, 193, and 195 each coordinate K(+). The residue at position 354 (Lys-354) is an N6-acetyllysine.

As to quaternary structure, heterotetramer of two PDHA1 and two PDHB subunits. The heterotetramer interacts with DLAT, and is part of the multimeric pyruvate dehydrogenase complex that contains multiple copies of pyruvate dehydrogenase (E1), dihydrolipoamide acetyltransferase (DLAT, E2) and lipoamide dehydrogenase (DLD, E3). These subunits are bound to an inner core composed of about 48 DLAT and 12 PDHX molecules. Interacts with DLAT. It depends on thiamine diphosphate as a cofactor.

The protein resides in the mitochondrion matrix. It catalyses the reaction N(6)-[(R)-lipoyl]-L-lysyl-[protein] + pyruvate + H(+) = N(6)-[(R)-S(8)-acetyldihydrolipoyl]-L-lysyl-[protein] + CO2. The pyruvate dehydrogenase complex catalyzes the overall conversion of pyruvate to acetyl-CoA and CO(2), and thereby links the glycolytic pathway to the tricarboxylic cycle. The sequence is that of Pyruvate dehydrogenase E1 component subunit beta, mitochondrial (PDHB) from Homo sapiens (Human).